We begin with the raw amino-acid sequence, 363 residues long: TBC1 domain family member whacked (363 aa).

Residues 77-265 (GIPKSVRPKA…RVWDCFLAEG (189 aa)) form the Rab-GAP TBC domain. Residues 335–363 (KARRAKQKAQQEAESSGSGNGHRRNMPTL) form a disordered region.

It is found in the apical cell membrane. The protein localises to the cytoplasmic vesicle. Its subcellular location is the cell projection. It localises to the filopodium. Its function is as follows. Essential for ensuring the polarized growth of tracheal seamless tubes. During seamless tube morphogenesis, likely to act as a GTPase-activating protein (GAP) for Rab35 to regulate vesicle trafficking from the recycling endosomes to the lumenal apical membrane to ensure the polarized dynein motor complex-dependent growth of seamless tubes along the proximodistal axis in tracheal terminal cells. When the terminal branch lumen is growing, Rab35-GTP is active and likely directs the transport of apical membrane vesicles from the soma to the distal tip of elongating terminal cell branches thus providing a continuous supply of apical membrane components as the lumen grows. Whereas when Rab35-GDP is inactivated, presumably by this GAP, apical membrane vesicles are transported to a central location adjacent to the terminal cell nucleus. The polypeptide is TBC1 domain family member whacked (Drosophila melanogaster (Fruit fly)).